The primary structure comprises 494 residues: MPPAIGGPVGYTPPDGGWGWAVVVGAFISIGFSYAFPKSITVFFKEIEIIFSATTSEVSWISSIMLAVMYAGGPISSILVNKYGSRPVMIAGGCLSGCGLIAASFCNTVQELYFCIGVIGGLGLAFNLNPALTMIGKYFYKKRPLANGLAMAGSPVFLSTLAPLNQAFFGIFGWRGSFLILGGLLLNCCVAGSLMRPIGPQQGKVEKLKSKESLQEAGKSDANTDLIGGSPKGEKLSVFQTVNKFLDLSLFTHRGFLLYLSGNVVMFFGLFTPLVFLSNYGKSKHFSSEKSAFLLSILAFVDMVARPSMGLAANTRWIRPRVQYFFAASVVANGVCHLLAPLSTTYVGFCIYAGVFGFAFGWLSSVLFETLMDLVGPQRFSSAVGLVTIVECCPVLLGPPLLGRLNDMYGDYKYTYWACGVILIIAGLYLFIGMGINYRLVAKEQKAEEKKRDGKEDETSTDVDEKPKKTMKETQSPAPLQNSSGDPAEEESPV.

The Cytoplasmic segment spans residues 1-22; it reads MPPAIGGPVGYTPPDGGWGWAV. The helical transmembrane segment at 23–44 threads the bilayer; sequence VVGAFISIGFSYAFPKSITVFF. Lys-38 contributes to the (S)-lactate binding site. The Extracellular portion of the chain corresponds to 45–55; it reads KEIEIIFSATT. Residues 56-80 traverse the membrane as a helical segment; the sequence is SEVSWISSIMLAVMYAGGPISSILV. Residues 81–84 lie on the Cytoplasmic side of the membrane; it reads NKYG. Residues 85–105 traverse the membrane as a helical segment; the sequence is SRPVMIAGGCLSGCGLIAASF. The Extracellular segment spans residues 106-109; the sequence is CNTV. Residues 110 to 132 form a helical membrane-spanning segment; the sequence is QELYFCIGVIGGLGLAFNLNPAL. Residues 133 to 146 lie on the Cytoplasmic side of the membrane; it reads TMIGKYFYKKRPLA. Residues 147 to 169 traverse the membrane as a helical segment; it reads NGLAMAGSPVFLSTLAPLNQAFF. Topologically, residues 170 to 174 are extracellular; sequence GIFGW. Residues 175-194 form a helical membrane-spanning segment; the sequence is RGSFLILGGLLLNCCVAGSL. The Cytoplasmic segment spans residues 195 to 254; it reads MRPIGPQQGKVEKLKSKESLQEAGKSDANTDLIGGSPKGEKLSVFQTVNKFLDLSLFTHR. 3 positions are modified to phosphoserine: Ser-210, Ser-213, and Ser-220. Thr-224 is subject to Phosphothreonine. The residue at position 230 (Ser-230) is a Phosphoserine. Residues 255-281 traverse the membrane as a helical segment; that stretch reads GFLLYLSGNVVMFFGLFTPLVFLSNYG. At 282-288 the chain is on the extracellular side; the sequence is KSKHFSS. A helical transmembrane segment spans residues 289–310; it reads EKSAFLLSILAFVDMVARPSMG. Position 302 (Asp-302) interacts with H(+). Residue Arg-306 coordinates (S)-lactate. Residues 311–321 lie on the Cytoplasmic side of the membrane; it reads LAANTRWIRPR. The helical transmembrane segment at 322 to 342 threads the bilayer; the sequence is VQYFFAASVVANGVCHLLAPL. At 343 to 346 the chain is on the extracellular side; sequence STTY. Residues 347–368 form a helical membrane-spanning segment; sequence VGFCIYAGVFGFAFGWLSSVLF. Topologically, residues 369 to 382 are cytoplasmic; sequence ETLMDLVGPQRFSS. Residues 383–403 traverse the membrane as a helical segment; the sequence is AVGLVTIVECCPVLLGPPLLG. At 404–414 the chain is on the extracellular side; that stretch reads RLNDMYGDYKY. The chain crosses the membrane as a helical span at residues 415–436; that stretch reads TYWACGVILIIAGLYLFIGMGI. At 437–494 the chain is on the cytoplasmic side; the sequence is NYRLVAKEQKAEEKKRDGKEDETSTDVDEKPKKTMKETQSPAPLQNSSGDPAEEESPV. Positions 446-472 are enriched in basic and acidic residues; it reads KAEEKKRDGKEDETSTDVDEKPKKTMK. The tract at residues 446–494 is disordered; it reads KAEEKKRDGKEDETSTDVDEKPKKTMKETQSPAPLQNSSGDPAEEESPV. Thr-459 is modified (phosphothreonine). At Ser-460 the chain carries Phosphoserine. The residue at position 461 (Thr-461) is a Phosphothreonine. Over residues 473-485 the composition is skewed to polar residues; sequence ETQSPAPLQNSSG. 4 positions are modified to phosphoserine: Ser-476, Ser-483, Ser-484, and Ser-492.

This sequence belongs to the major facilitator superfamily. Monocarboxylate porter (TC 2.A.1.13) family. As to quaternary structure, interacts with BSG. Interacts with EMB. Interaction with either BSG or EMB is required for expression at the cell membrane. Detected in erythrocytes (at protein level). Detected in brain, heart, kidney, lung, muscle, jejunum enterocytes and brain capillaries.

The protein localises to the cell membrane. The protein resides in the basolateral cell membrane. It localises to the apical cell membrane. The catalysed reaction is (S)-lactate(in) + H(+)(in) = (S)-lactate(out) + H(+)(out). It catalyses the reaction pyruvate(out) + H(+)(out) = pyruvate(in) + H(+)(in). The enzyme catalyses acetoacetate(out) + H(+)(out) = acetoacetate(in) + H(+)(in). It carries out the reaction (S)-3-hydroxybutanoate(out) + H(+)(out) = (S)-3-hydroxybutanoate(in) + H(+)(in). The catalysed reaction is (R)-3-hydroxybutanoate(out) + H(+)(out) = (R)-3-hydroxybutanoate(in) + H(+)(in). It catalyses the reaction 3-methyl-2-oxobutanoate(out) + H(+)(out) = 3-methyl-2-oxobutanoate(in) + H(+)(in). The enzyme catalyses 4-methyl-2-oxopentanoate(out) + H(+)(out) = 4-methyl-2-oxopentanoate(in) + H(+)(in). Inhibited by stilbene disulfonates, such as di-isothiocyanostilbene disulfonate(DIDS), a cross-linking reagent that forms covalent linkages with lysine groups. Functionally, bidirectional proton-coupled monocarboxylate transporter. Catalyzes the rapid transport across the plasma membrane of many monocarboxylates such as lactate, pyruvate, acetate and the ketone bodies acetoacetate and beta-hydroxybutyrate, and thus contributes to the maintenance of intracellular pH. The transport direction is determined by the proton motive force and the concentration gradient of the substrate monocarboxylate. MCT1 is a major lactate exporter. Plays a role in cellular responses to a high-fat diet by modulating the cellular levels of lactate and pyruvate that contribute to the regulation of central metabolic pathways and insulin secretion, with concomitant effects on plasma insulin levels and blood glucose homeostasis. Facilitates the protonated monocarboxylate form of succinate export, that its transient protonation upon muscle cell acidification in exercising muscle and ischemic heart. Functions via alternate outward- and inward-open conformation states. Protonation and deprotonation of 302-Asp is essential for the conformational transition. This is Monocarboxylate transporter 1 (Slc16a1) from Rattus norvegicus (Rat).